A 371-amino-acid polypeptide reads, in one-letter code: Dead end protein homolog 1 (371 aa).

RRM domains follow at residues 85–163 (PQDI…ALDG) and 165–245 (PGNF…KLRS).

Its subcellular location is the nucleus. The protein resides in the cytoplasm. RNA-binding factor that positively regulates gene expression by prohibiting miRNA-mediated gene suppression. Relieves miRNA repression in germline cells. Prohibits the function of several miRNAs by blocking the accessibility of target mRNAs. Sequence-specific RNA-binding factor that binds to U-rich regions (URRs) in the 3'untranslated region (3'-UTR) of several mRNAs. Does not bind to miRNAs. May play a role during early embryonic survival. In Xenopus laevis (African clawed frog), this protein is Dead end protein homolog 1 (dnd1).